We begin with the raw amino-acid sequence, 240 residues long: Arginine transport ATP-binding protein ArtM (240 aa).

Positions 2–236 (IKVEKLSKSF…PKSKRAQDFL (235 aa)) constitute an ABC transporter domain. 34–41 (GPSGSGKS) provides a ligand contact to ATP.

This sequence belongs to the ABC transporter superfamily.

The protein resides in the cell membrane. In terms of biological role, part of a binding-protein-dependent transport system for arginine. Probably responsible for energy coupling to the transport system. This Bacillus subtilis (strain 168) protein is Arginine transport ATP-binding protein ArtM (artM).